The chain runs to 240 residues: Purine nucleoside phosphorylase RP494 (240 aa).

Zn(2+)-binding residues include His60, Cys96, and His113.

It belongs to the purine nucleoside phosphorylase YfiH/LACC1 family. Homodimer. Cu(2+) serves as cofactor. Requires Zn(2+) as cofactor.

It catalyses the reaction adenosine + phosphate = alpha-D-ribose 1-phosphate + adenine. The catalysed reaction is S-methyl-5'-thioadenosine + phosphate = 5-(methylsulfanyl)-alpha-D-ribose 1-phosphate + adenine. It carries out the reaction inosine + phosphate = alpha-D-ribose 1-phosphate + hypoxanthine. The enzyme catalyses adenosine + H2O + H(+) = inosine + NH4(+). Its function is as follows. Purine nucleoside enzyme that catalyzes the phosphorolysis of adenosine and inosine nucleosides, yielding D-ribose 1-phosphate and the respective free bases, adenine and hypoxanthine. Also catalyzes the phosphorolysis of S-methyl-5'-thioadenosine into adenine and S-methyl-5-thio-alpha-D-ribose 1-phosphate. Also has adenosine deaminase activity. In Rickettsia prowazekii (strain Madrid E), this protein is Purine nucleoside phosphorylase RP494.